The chain runs to 703 residues: Polyribonucleotide nucleotidyltransferase (703 aa).

Residues aspartate 486 and aspartate 492 each contribute to the Mg(2+) site. Residues 553-614 enclose the KH domain; sequence PRITTIWIKP…AACDAAIQMI (62 aa). Residues 624–692 enclose the S1 motif domain; the sequence is GKLYMGTVKK…KQGKIKLSRK (69 aa).

The protein belongs to the polyribonucleotide nucleotidyltransferase family. Mg(2+) is required as a cofactor.

It is found in the cytoplasm. The catalysed reaction is RNA(n+1) + phosphate = RNA(n) + a ribonucleoside 5'-diphosphate. Its function is as follows. Involved in mRNA degradation. Catalyzes the phosphorolysis of single-stranded polyribonucleotides processively in the 3'- to 5'-direction. This is Polyribonucleotide nucleotidyltransferase from Trichlorobacter lovleyi (strain ATCC BAA-1151 / DSM 17278 / SZ) (Geobacter lovleyi).